A 205-amino-acid chain; its full sequence is Melanocortin-2 receptor accessory protein 2 (205 aa).

An N-linked (GlcNAc...) asparagine glycan is attached at asparagine 9. Residues 45–65 form a helical membrane-spanning segment; the sequence is IVIGFWVGLAVFVIFMFFVLT. Serine 89 carries the post-translational modification Phosphoserine.

It belongs to the MRAP family. In terms of assembly, homodimer and heterodimer. Forms antiparallel homodimers and heterodimers with MRAP. Interacts with MC1R, MC2R, MC3R, MC4R and MC5R. As to expression, expressed in the adrenal gland and brain. Not expressed in other tissues.

The protein localises to the cell membrane. It localises to the endoplasmic reticulum membrane. Functionally, modulator of melanocortin receptor 4 (MC4R), a receptor involved in energy homeostasis. Plays a central role in the control of energy homeostasis and body weight regulation by increasing ligand-sensitivity of MC4R and MC4R-mediated generation of cAMP. May also act as a negative regulator of MC2R: competes with MRAP for binding to MC2R and impairs the binding of corticotropin (ACTH) to MC2R. May also regulate activity of other melanocortin receptors (MC1R, MC3R and MC5R); however, additional evidence is required in vivo. The polypeptide is Melanocortin-2 receptor accessory protein 2 (MRAP2) (Homo sapiens (Human)).